Consider the following 157-residue polypeptide: uncharacterized protein (157 aa).

A compositionally biased stretch (basic and acidic residues) spans 1 to 11; that stretch reads MGDLEGQDRPD. The interval 1-22 is disordered; that stretch reads MGDLEGQDRPDPISTMVGPSGT.

Its subcellular location is the mitochondrion. This is an uncharacterized protein from Arabidopsis thaliana (Mouse-ear cress).